Reading from the N-terminus, the 132-residue chain is Secreted RxLR effector protein RXLR-C22 (132 aa).

The first 21 residues, 1–21 (MRSLVWAVIATLIVLTPFSEA), serve as a signal peptide directing secretion. A RxLR-dEER motif is present at residues 56 to 74 (RKLQSDSVKKGDSTGLEER). Asparagine 116 is a glycosylation site (N-linked (GlcNAc...) asparagine).

This sequence belongs to the RxLR effector family.

It localises to the secreted. Its subcellular location is the host Golgi apparatus. Its function is as follows. Secreted effector that does not suppress pattern-triggered immunity (PTI) in plant host. This chain is Secreted RxLR effector protein RXLR-C22, found in Plasmopara halstedii (Downy mildew of sunflower).